We begin with the raw amino-acid sequence, 4351 residues long: Protocadherin Fat 2 (4351 aa).

The signal sequence occupies residues 1 to 18; that stretch reads MTLVLLGVAMVLLHRAAC. Over 19–4050 the chain is Extracellular; the sequence is EKPLEETITP…IKRGDWGQQE (4032 aa). Cadherin domains follow at residues 34-148 and 149-256; these read THSL…KPLF and SPPS…PPVI. Asn39, Asn210, Asn280, and Asn330 each carry an N-linked (GlcNAc...) asparagine glycan. 31 consecutive Cadherin domains span residues 363 to 458, 459 to 564, 565 to 669, 716 to 820, 821 to 925, 926 to 1032, 1033 to 1142, 1138 to 1242, 1243 to 1346, 1350 to 1448, 1449 to 1555, 1556 to 1660, 1661 to 1758, 1759 to 1872, 1873 to 1968, 1969 to 2070, 2071 to 2171, 2172 to 2272, 2273 to 2379, 2380 to 2481, 2482 to 2585, 2586 to 2692, 2693 to 2799, 2800 to 2908, 2909 to 3013, 3014 to 3115, 3116 to 3220, 3221 to 3323, 3324 to 3428, 3429 to 3533, and 3534 to 3631; these read EKAV…APVF, NRSS…QPMF, EEVN…VPVQ, DHFP…PPRF, PPGG…PPQC, ITEH…SPHF, SSFV…RPVF, SRPV…SPMF, SHKL…SSIP, DESH…RPQF, LQDH…SPHF, TQPR…APIF, SKDE…APAF, LKST…PPRF, SEQI…SLQF, DQDI…IPEF, QHLP…NPLF, QSPY…PPTF, SQLV…PPEF, REPQ…SPEF, QQNV…APQF, KASG…LPKF, SEPL…RPVF, EADP…PPRF, ASED…SPQC, SQLL…APRF, FPSH…LPIF, LNSE…HPRF, THDL…PPRF, FQLN…PPST, and LPLE…APQQ. N-linked (GlcNAc...) asparagine glycans are attached at residues Asn459, Asn568, Asn627, and Asn789. N-linked (GlcNAc...) asparagine glycosylation is present at Asn996. N-linked (GlcNAc...) asparagine glycosylation is found at Asn1175, Asn1276, and Asn1417. N-linked (GlcNAc...) asparagine glycans are attached at residues Asn1899, Asn1998, Asn2007, Asn2102, Asn2165, Asn2183, Asn2325, Asn2368, Asn2387, Asn2430, Asn2470, Asn2547, and Asn2597. Residues Asn3127, Asn3278, and Asn3312 are each glycosylated (N-linked (GlcNAc...) asparagine). N-linked (GlcNAc...) asparagine glycosylation is found at Asn3432, Asn3603, Asn3770, Asn3774, Asn3815, Asn3842, Asn3875, and Asn3906. One can recognise a Laminin G-like domain in the interval 3775-3946; it reads GTTWRFSGQS…YLETWALSQC (172 aa). Intrachain disulfides connect Cys3914–Cys3946, Cys3953–Cys3964, Cys3958–Cys3974, and Cys3976–Cys3985. EGF-like domains are found at residues 3949–3986 and 3988–4024; these read PGTT…RNCE and GREN…DRCE. N-linked (GlcNAc...) asparagine glycosylation is present at Asn3991. 3 cysteine pairs are disulfide-bonded: Cys3992/Cys4003, Cys3997/Cys4012, and Cys4014/Cys4023. Residues 4051–4071 traverse the membrane as a helical segment; sequence FLVIIVALPLLIIATVGLLLY. The Cytoplasmic portion of the chain corresponds to 4072 to 4351; the sequence is CRRCKSHKPV…DYGSCEEVMF (280 aa). The disordered stretch occupies residues 4313-4340; that stretch reads DCEVNGGPAPGRSQPRAPPNYEGSDMVE.

As to quaternary structure, homodimer.

The protein resides in the cell membrane. The protein localises to the cell junction. Its subcellular location is the golgi apparatus. It is found in the trans-Golgi network. Functionally, involved in the regulation of cell migration. May be involved in mediating the organization of the parallel fibers of granule cells during cerebellar development. The chain is Protocadherin Fat 2 (Fat2) from Mus musculus (Mouse).